We begin with the raw amino-acid sequence, 336 residues long: IgLON family member 5 (336 aa).

A signal peptide spans 1–30; sequence MPPPAPGARLRLLAAAALAGLAVISRGLLS. 3 consecutive Ig-like C2-type domains span residues 33–122, 132–217, and 218–307; these read LEFN…QPYT, PARI…VNYP, and PTIT…MRLL. Residues Asn-41, Asn-49, Asn-67, and Asn-137 are each glycosylated (N-linked (GlcNAc...) asparagine). Cysteines 54 and 112 form a disulfide. 2 cysteine pairs are disulfide-bonded: Cys-154–Cys-195 and Cys-238–Cys-291. N-linked (GlcNAc...) asparagine glycosylation is present at Asn-288.

It belongs to the immunoglobulin superfamily. IgLON family.

Its subcellular location is the secreted. In Homo sapiens (Human), this protein is IgLON family member 5 (IGLON5).